Here is a 238-residue protein sequence, read N- to C-terminus: MAAKYLSAANAAALDKDLMSMGAFSLDQLMELAGLSVSQVVYKVHPPSKGRRILVACGPGNNGGDGLVAARHLWHYGYKPTIYYPKPGKNELYQRLSTQLRNLSIPFTDDFPSAIKDSDHIVDAIFGFSFTGSIRSPFDTIISTLEATSLPITSIDAPSSWDITNGPPSSGPGANLMPQYLISLTAPKPLVRYFKGRHFLGGRFVTPEIHQKYNLQLPEYEGVDQIVEVPIEESEEKL.

Positions 11–217 constitute a YjeF N-terminal domain; that stretch reads AAALDKDLMS…EIHQKYNLQL (207 aa). Residue 61-65 coordinates (6S)-NADPHX; sequence NNGGD. Positions 62 and 123 each coordinate K(+). (6S)-NADPHX is bound by residues 127-133 and aspartate 156; that span reads GFSFTGS. Serine 159 contacts K(+).

The protein belongs to the NnrE/AIBP family. The cofactor is K(+).

It is found in the cytoplasm. The protein resides in the mitochondrion. It catalyses the reaction (6R)-NADHX = (6S)-NADHX. It carries out the reaction (6R)-NADPHX = (6S)-NADPHX. In terms of biological role, catalyzes the epimerization of the S- and R-forms of NAD(P)HX, a damaged form of NAD(P)H that is a result of enzymatic or heat-dependent hydration. This is a prerequisite for the S-specific NAD(P)H-hydrate dehydratase to allow the repair of both epimers of NAD(P)HX. In Sclerotinia sclerotiorum (strain ATCC 18683 / 1980 / Ss-1) (White mold), this protein is NAD(P)H-hydrate epimerase.